Here is a 941-residue protein sequence, read N- to C-terminus: Protein BREAST CANCER SUSCEPTIBILITY 1 homolog (941 aa).

An RING-type zinc finger spans residues 16–54 (CPICLSLYNSAVSLSCNHVFCNACIVKSMKMDATCPVCK). Disordered regions lie at residues 87–282 (FVSQ…ILPS) and 303–528 (KVKV…GKDD). 2 stretches are compositionally biased toward basic and acidic residues: residues 96 to 115 (SDKE…DKNR) and 125 to 136 (KRNEYGKTKEID). Over residues 157-173 (LLQNLSAESLTKPTESV) the composition is skewed to polar residues. A compositionally biased stretch (basic and acidic residues) spans 175-196 (TAEKPKDYTENTVIRLDEHPSL). Over residues 216-236 (NSSQRTESDQLLGTTPVNVPS) the composition is skewed to polar residues. Over residues 242 to 255 (DSDHESPSKEDEQQ) the composition is skewed to basic and acidic residues. The short motif at 298-305 (QKKLPKVK) is the Nuclear localization signal 1 element. Composition is skewed to polar residues over residues 329–357 (GVSQ…SGTI) and 376–391 (SKAQ…NVSN). Composition is skewed to basic and acidic residues over residues 428–453 (GKGD…EKPS) and 477–487 (KTSEKKLKLDS). The Nuclear localization signal 2 motif lies at 444–451 (EKRSPTEK). Positions 489–498 (MISSKATQPH) are enriched in polar residues. Over residues 512-528 (DKQDSRNNRKSTVGKDD) the composition is skewed to basic and acidic residues. Residues 561-612 (KFTCAFCQCSEDTEASGEMTHYYRGEPVSADFNGGSKVIHVHKNCAEWAPNV) form a C2HC pre-PHD-type zinc finger. Residues 632 to 681 (ISCSCCGLKGAALGCYNKSCKNSFHVTCAKLIPECRWDNVKFVMLCPLDA) form a PHD-type; degenerate zinc finger. BRCT domains lie at 724-819 (KQFH…PYEI) and 840-941 (KKPK…LVLI).

Forms heterodimer with BARD1/ROW1. In terms of tissue distribution, expressed ubiquitously with highest levels in flower buds. Mostly expressed in flowers and siliques, and, to a lower extent, in roots, rosette leaves, inflorescence and young cauline leaves.

Its subcellular location is the nucleus. Plays a role in DNA repair and in cell-cycle control. Required for the repair of DNA double-strand breaks (DSBs), both natural and induced by genotoxic stress, by homologous recombination (HR). The polypeptide is Protein BREAST CANCER SUSCEPTIBILITY 1 homolog (Arabidopsis thaliana (Mouse-ear cress)).